The sequence spans 908 residues: Protein translocase subunit SecA (908 aa).

Residues Gln87, 105 to 109, and Asp512 each bind ATP; that span reads GEGKT. Positions 865–908 are disordered; the sequence is GGDDGSDEMMAHTPMIRDGDKVGRNDPCPCGSGRKYKQCHGKLS. Basic and acidic residues predominate over residues 879 to 888; the sequence is MIRDGDKVGR. The Zn(2+) site is built by Cys892, Cys894, Cys903, and His904. Residues 898-908 are compositionally biased toward basic residues; sequence RKYKQCHGKLS.

The protein belongs to the SecA family. Monomer and homodimer. Part of the essential Sec protein translocation apparatus which comprises SecA, SecYEG and auxiliary proteins SecDF-YajC and YidC. Requires Zn(2+) as cofactor.

The protein localises to the cell inner membrane. It localises to the cytoplasm. The catalysed reaction is ATP + H2O + cellular proteinSide 1 = ADP + phosphate + cellular proteinSide 2.. In terms of biological role, part of the Sec protein translocase complex. Interacts with the SecYEG preprotein conducting channel. Has a central role in coupling the hydrolysis of ATP to the transfer of proteins into and across the cell membrane, serving both as a receptor for the preprotein-SecB complex and as an ATP-driven molecular motor driving the stepwise translocation of polypeptide chains across the membrane. This is Protein translocase subunit SecA from Shewanella sp. (strain MR-7).